The following is a 683-amino-acid chain: Dynein, 78 kDa intermediate chain, flagellar outer arm (683 aa).

Residues 1 to 42 (MPALSPAKKGTDKGKTGKKTGKQEQNAQDYIPPPPPMPGDEA) form a disordered region. WD repeat units follow at residues 358–398 (HTES…DEPI), 407–450 (KLND…LIPE), 562–602 (DLND…LLPL), and 608–647 (VKKA…RITS).

Belongs to the dynein intermediate chain family. Consists of at least 3 heavy chains (alpha, beta and gamma), 2 intermediate chains and 8 light chains.

Its subcellular location is the cytoplasm. It localises to the cytoskeleton. The protein localises to the flagellum axoneme. Is essential for arm assembly or attachment to the outer doublet microtubule. This is Dynein, 78 kDa intermediate chain, flagellar outer arm (ODA9) from Chlamydomonas reinhardtii (Chlamydomonas smithii).